Consider the following 398-residue polypeptide: Phosphoglycerate kinase (398 aa).

Substrate is bound by residues 23-25 (DLN), R38, 61-64 (HFGR), R120, and R153. ATP contacts are provided by residues K203, E325, and 355-358 (GGDT).

It belongs to the phosphoglycerate kinase family. As to quaternary structure, monomer.

The protein resides in the cytoplasm. It catalyses the reaction (2R)-3-phosphoglycerate + ATP = (2R)-3-phospho-glyceroyl phosphate + ADP. The protein operates within carbohydrate degradation; glycolysis; pyruvate from D-glyceraldehyde 3-phosphate: step 2/5. The protein is Phosphoglycerate kinase of Chelativorans sp. (strain BNC1).